The chain runs to 138 residues: Cysteine desulfuration protein SufE (138 aa).

The Cysteine persulfide intermediate role is filled by cysteine 51.

This sequence belongs to the SufE family. In terms of assembly, homodimer. Interacts with SufS.

Its subcellular location is the cytoplasm. The protein operates within cofactor biosynthesis; iron-sulfur cluster biosynthesis. Functionally, participates in cysteine desulfuration mediated by SufS. Cysteine desulfuration mobilizes sulfur from L-cysteine to yield L-alanine and constitutes an essential step in sulfur metabolism for biosynthesis of a variety of sulfur-containing biomolecules. Functions as a sulfur acceptor for SufS, by mediating the direct transfer of the sulfur atom from the S-sulfanylcysteine of SufS, an intermediate product of cysteine desulfuration process. This is Cysteine desulfuration protein SufE from Klebsiella pneumoniae (strain 342).